The following is a 464-amino-acid chain: Chitobiosyldiphosphodolichol beta-mannosyltransferase (464 aa).

Topologically, residues 1–2 are lumenal; it reads MA. Residues 3-23 traverse the membrane as a helical segment; sequence ASCLVLLALCLLLPLLLLGGW. Topologically, residues 24–99 are cytoplasmic; it reads KRWRRGRAAR…ELQSLAVGPR (76 aa). The helical intramembrane region spans 100 to 120; that stretch reads VFQYGVKVVLQAMYLLWKLMW. Over 121-464 the chain is Cytoplasmic; it reads REPGAYIFLQ…QTVLPLVMDT (344 aa). Ser242 bears the Phosphoserine mark. The interval 243-262 is disordered; sequence PFRARSEPEDPVTERSAFTE.

Belongs to the glycosyltransferase group 1 family. Glycosyltransferase 33 subfamily.

It localises to the endoplasmic reticulum membrane. The catalysed reaction is an N,N'-diacetylchitobiosyl-diphospho-di-trans,poly-cis-dolichol + GDP-alpha-D-mannose = a beta-D-Man-(1-&gt;4)-beta-D-GlcNAc-(1-&gt;4)-alpha-D-GlcNAc-diphospho-di-trans,poly-cis-dolichol + GDP + H(+). It functions in the pathway protein modification; protein glycosylation. Functionally, mannosyltransferase that operates in the biosynthetic pathway of dolichol-linked oligosaccharides, the glycan precursors employed in protein asparagine (N)-glycosylation. The assembly of dolichol-linked oligosaccharides begins on the cytosolic side of the endoplasmic reticulum membrane and finishes in its lumen. The sequential addition of sugars to dolichol pyrophosphate produces dolichol-linked oligosaccharides containing fourteen sugars, including two GlcNAcs, nine mannoses and three glucoses. Once assembled, the oligosaccharide is transferred from the lipid to nascent proteins by oligosaccharyltransferases. Catalyzes, on the cytoplasmic face of the endoplasmic reticulum, the addition of the first mannose residues to the dolichol-linked oligosaccharide chain, to produce Man1GlcNAc(2)-PP-dolichol core oligosaccharide. Man1GlcNAc(2)-PP-dolichol is a substrate for ALG2, the following enzyme in the biosynthetic pathway. This chain is Chitobiosyldiphosphodolichol beta-mannosyltransferase, found in Homo sapiens (Human).